The sequence spans 409 residues: Peptidase T (409 aa).

His78 is a binding site for Zn(2+). Asp80 is a catalytic residue. Asp140 is a Zn(2+) binding site. Catalysis depends on Glu173, which acts as the Proton acceptor. Residues Glu174, Asp196, and His379 each contribute to the Zn(2+) site.

This sequence belongs to the peptidase M20B family. The cofactor is Zn(2+).

The protein localises to the cytoplasm. It catalyses the reaction Release of the N-terminal residue from a tripeptide.. In terms of biological role, cleaves the N-terminal amino acid of tripeptides. This chain is Peptidase T, found in Salmonella heidelberg (strain SL476).